The primary structure comprises 412 residues: Short-chain specific acyl-CoA dehydrogenase, mitochondrial (412 aa).

A mitochondrion-targeting transit peptide spans Met-1 to Arg-24. Thr-27 is modified (phosphothreonine). Lys-51 carries the N6-acetyllysine; alternate modification. At Lys-51 the chain carries N6-succinyllysine; alternate. Lys-72 carries the post-translational modification N6-acetyllysine. The residue at position 129 (Lys-129) is an N6-acetyllysine; alternate. Lys-129 bears the N6-succinyllysine; alternate mark. FAD is bound by residues Phe-152–Ser-161 and Trp-185–Thr-187. Substrate is bound at residue Ser-161. Lys-208 carries the post-translational modification N6-acetyllysine. Lys-262 is modified (N6-acetyllysine; alternate). Lys-262 bears the N6-succinyllysine; alternate mark. Asp-269–Arg-272 serves as a coordination point for substrate. Arg-297 lines the FAD pocket. N6-acetyllysine; alternate is present on Lys-306. Lys-306 carries the post-translational modification N6-succinyllysine; alternate. Residues Gln-308 and Gln-365 to Gly-369 each bind FAD. Glu-392 (proton acceptor) is an active-site residue. Position 393 (Gly-393) interacts with substrate. Thr-394 to Glu-396 contributes to the FAD binding site.

This sequence belongs to the acyl-CoA dehydrogenase family. Homotetramer. It depends on FAD as a cofactor.

It localises to the mitochondrion matrix. It catalyses the reaction a short-chain 2,3-saturated fatty acyl-CoA + oxidized [electron-transfer flavoprotein] + H(+) = a short-chain (2E)-enoyl-CoA + reduced [electron-transfer flavoprotein]. It carries out the reaction butanoyl-CoA + oxidized [electron-transfer flavoprotein] + H(+) = (2E)-butenoyl-CoA + reduced [electron-transfer flavoprotein]. The catalysed reaction is pentanoyl-CoA + oxidized [electron-transfer flavoprotein] + H(+) = (2E)-pentenoyl-CoA + reduced [electron-transfer flavoprotein]. The enzyme catalyses hexanoyl-CoA + oxidized [electron-transfer flavoprotein] + H(+) = (2E)-hexenoyl-CoA + reduced [electron-transfer flavoprotein]. It participates in lipid metabolism; mitochondrial fatty acid beta-oxidation. Short-chain specific acyl-CoA dehydrogenase is one of the acyl-CoA dehydrogenases that catalyze the first step of mitochondrial fatty acid beta-oxidation, an aerobic process breaking down fatty acids into acetyl-CoA and allowing the production of energy from fats. The first step of fatty acid beta-oxidation consists in the removal of one hydrogen from C-2 and C-3 of the straight-chain fatty acyl-CoA thioester, resulting in the formation of trans-2-enoyl-CoA. Among the different mitochondrial acyl-CoA dehydrogenases, short-chain specific acyl-CoA dehydrogenase acts specifically on acyl-CoAs with saturated 4 to 6 carbons long primary chains. This is Short-chain specific acyl-CoA dehydrogenase, mitochondrial (ACADS) from Bos taurus (Bovine).